We begin with the raw amino-acid sequence, 605 residues long: UvrABC system protein C (605 aa).

The 78-residue stretch at 15–92 (GLPGCYLMKN…IQKHQPYFNI (78 aa)) folds into the GIY-YIG domain. The UVR domain occupies 197–232 (GHAKKDLTQRMEKAAADMAYERAGDLRDQIRYIEAT).

Belongs to the UvrC family. Interacts with UvrB in an incision complex.

It is found in the cytoplasm. In terms of biological role, the UvrABC repair system catalyzes the recognition and processing of DNA lesions. UvrC both incises the 5' and 3' sides of the lesion. The N-terminal half is responsible for the 3' incision and the C-terminal half is responsible for the 5' incision. The chain is UvrABC system protein C from Levilactobacillus brevis (strain ATCC 367 / BCRC 12310 / CIP 105137 / JCM 1170 / LMG 11437 / NCIMB 947 / NCTC 947) (Lactobacillus brevis).